The primary structure comprises 288 residues: Ice-binding protein (288 aa).

A signal peptide spans 1-22 (MFSTTLINTFSLGLLAVVSVVA). 2 short sequence motifs (ice-binding site motif (T-A/G-X-T/N)) span residues 75 to 78 (TAGN) and 154 to 157 (TAFN). N-linked (GlcNAc...) asparagine glycosylation occurs at Asn194. 2 short sequence motifs (ice-binding site motif (T-A/G-X-T/N)) span residues 196–199 (TGVT) and 265–268 (TGAT).

Belongs to the ice-binding protein family.

The protein localises to the secreted. Its function is as follows. Binds ice crystals and most probably inhibits their growth in order to prevent cell damage from extracellular ice. In Lentinula edodes (Shiitake mushroom), this protein is Ice-binding protein.